The following is a 147-amino-acid chain: Nucleoside diphosphate kinase (147 aa).

Residues K9, F57, R85, T91, R102, and N112 each contribute to the ATP site. T91 carries the phosphothreonine modification. The Pros-phosphohistidine intermediate role is filled by H115. At S122 the chain carries Phosphoserine.

It belongs to the NDK family. In terms of assembly, homotetramer. Mg(2+) is required as a cofactor.

It localises to the cytoplasm. The catalysed reaction is a 2'-deoxyribonucleoside 5'-diphosphate + ATP = a 2'-deoxyribonucleoside 5'-triphosphate + ADP. It carries out the reaction a ribonucleoside 5'-diphosphate + ATP = a ribonucleoside 5'-triphosphate + ADP. Its function is as follows. Major role in the synthesis of nucleoside triphosphates other than ATP. The ATP gamma phosphate is transferred to the NDP beta phosphate via a ping-pong mechanism, using a phosphorylated active-site intermediate. The sequence is that of Nucleoside diphosphate kinase from Halalkalibacterium halodurans (strain ATCC BAA-125 / DSM 18197 / FERM 7344 / JCM 9153 / C-125) (Bacillus halodurans).